The following is a 303-amino-acid chain: Terpene synthase (303 aa).

2 residues coordinate Mg(2+): Asp-69 and Asp-73. A DDXXD motif motif is present at residues 69 to 73 (DDIQD).

This sequence belongs to the FPP/GGPP synthase family. Mg(2+) serves as cofactor.

It carries out the reaction (2E)-geranyl diphosphate + H2O = (2E)-geraniol + diphosphate. In terms of biological role, terpene synthase that is able to convert geraniol diphosphate to geraniol in tea leaves. This is Terpene synthase from Matsumurasca onukii (Tea green leafhopper).